The chain runs to 152 residues: Sec-independent protein translocase protein TatB (152 aa).

The helical transmembrane segment at 1-21 threads the bilayer; that stretch reads MLDVGFGELFCFGIIALLVLG.

This sequence belongs to the TatB family. The Tat system comprises two distinct complexes: a TatABC complex, containing multiple copies of TatA, TatB and TatC subunits, and a separate TatA complex, containing only TatA subunits. Substrates initially bind to the TatABC complex, which probably triggers association of the separate TatA complex to form the active translocon.

The protein resides in the cell inner membrane. Its function is as follows. Part of the twin-arginine translocation (Tat) system that transports large folded proteins containing a characteristic twin-arginine motif in their signal peptide across membranes. Together with TatC, TatB is part of a receptor directly interacting with Tat signal peptides. TatB may form an oligomeric binding site that transiently accommodates folded Tat precursor proteins before their translocation. The polypeptide is Sec-independent protein translocase protein TatB (Acinetobacter baylyi (strain ATCC 33305 / BD413 / ADP1)).